The following is a 396-amino-acid chain: Elongation factor Tu (396 aa).

Residues 10-206 (KPHCNIGTIG…AVDAYIPQPE (197 aa)) enclose the tr-type G domain. Residues 19–26 (GHVDHGKT) form a G1 region. 19–26 (GHVDHGKT) provides a ligand contact to GTP. Thr26 contacts Mg(2+). Residues 60-64 (GITIS) are G2. A G3 region spans residues 81–84 (DCPG). Residues 81 to 85 (DCPGH) and 136 to 139 (NKVD) each bind GTP. The segment at 136–139 (NKVD) is G4. The interval 174–176 (SAL) is G5.

This sequence belongs to the TRAFAC class translation factor GTPase superfamily. Classic translation factor GTPase family. EF-Tu/EF-1A subfamily. Monomer.

Its subcellular location is the cytoplasm. The catalysed reaction is GTP + H2O = GDP + phosphate + H(+). Its function is as follows. GTP hydrolase that promotes the GTP-dependent binding of aminoacyl-tRNA to the A-site of ribosomes during protein biosynthesis. The sequence is that of Elongation factor Tu from Parvibaculum lavamentivorans (strain DS-1 / DSM 13023 / NCIMB 13966).